Consider the following 224-residue polypeptide: uncharacterized protein (224 aa).

This is an uncharacterized protein from Methanocaldococcus jannaschii (strain ATCC 43067 / DSM 2661 / JAL-1 / JCM 10045 / NBRC 100440) (Methanococcus jannaschii).